Consider the following 29-residue polypeptide: Conotoxin SIVC (29 aa).

N-acetylalanine; partial is present on A1. P2 bears the 4-hydroxyproline mark. O-linked (HexNAc...) threonine glycosylation is found at T7 and T9. 4-hydroxyproline is present on residues P18 and P22. The residue at position 29 (C29) is a Cysteine amide.

The protein belongs to the conotoxin A superfamily. In terms of processing, O-linked glycans consist of Hex4-HexNAc2 hexasaccharides. Post-translationally, N-terminus is found to be free and N-acetylated, depending on the fraction studied. Contains 3 disulfide bonds. As to expression, expressed by the venom duct. Low expression in the distal venom duct sections.

The protein resides in the secreted. Its function is as follows. Probable neurotoxin with ion channel inhibitor activity. This is Conotoxin SIVC from Conus striatus (Striated cone).